A 455-amino-acid polypeptide reads, in one-letter code: Cysteine--tRNA ligase (455 aa).

Cys28 is a Zn(2+) binding site. The 'HIGH' region signature appears at 30 to 40; that stretch reads MTVYDYCHLGH. Residues Cys209, His234, and Glu238 each contribute to the Zn(2+) site. The short motif at 266–270 is the 'KMSKS' region element; it reads KMSKS. Lys269 serves as a coordination point for ATP.

This sequence belongs to the class-I aminoacyl-tRNA synthetase family. As to quaternary structure, monomer. Zn(2+) serves as cofactor.

The protein localises to the cytoplasm. It carries out the reaction tRNA(Cys) + L-cysteine + ATP = L-cysteinyl-tRNA(Cys) + AMP + diphosphate. The chain is Cysteine--tRNA ligase from Methylobacillus flagellatus (strain ATCC 51484 / DSM 6875 / VKM B-1610 / KT).